We begin with the raw amino-acid sequence, 324 residues long: Integrin-binding sialoprotein (324 aa).

Positions Met-1 to Ala-16 are cleaved as a signal peptide. Phosphoserine is present on residues Ser-31, Ser-67, Ser-75, Ser-76, and Ser-95. Disordered stretches follow at residues Val-60–Leu-228 and Gln-243–Ser-263. A compositionally biased stretch (acidic residues) spans Ser-66–Ala-105. The segment covering Glu-106–Thr-130 has biased composition (polar residues). The N-linked (GlcNAc...) asparagine glycan is linked to Asn-107. Positions Lys-141 to Glu-154 are enriched in basic and acidic residues. Ser-155 is modified (phosphoserine). Residues Ser-155 to Glu-179 are compositionally biased toward acidic residues. 3 N-linked (GlcNAc...) asparagine glycosylation sites follow: Asn-183, Asn-188, and Asn-196. The span at Asn-203–Ser-213 shows a compositional bias: acidic residues. Positions Gly-253 to Ser-263 are enriched in polar residues. The Integrin-binding motif motif lies at Arg-293–Asp-295. Residues Tyr-320 and Tyr-321 each carry the sulfotyrosine modification.

Monomer. Interacts with integrins; the interaction promotes cell adhesion.

It is found in the secreted. In terms of biological role, binds tightly to hydroxyapatite. Appears to form an integral part of the mineralized matrix. Probably important to cell-matrix interaction. Promotes adhesion and migration of various cells via the alpha-V/beta-3 integrin receptor (ITGAV:ITGB3). This is Integrin-binding sialoprotein (Ibsp) from Mus musculus (Mouse).